Reading from the N-terminus, the 860-residue chain is Leucine--tRNA ligase (860 aa).

The 'HIGH' region signature appears at proline 42–histidine 52. A 'KMSKS' region motif is present at residues lysine 619–serine 623. Residue lysine 622 participates in ATP binding.

The protein belongs to the class-I aminoacyl-tRNA synthetase family.

Its subcellular location is the cytoplasm. It carries out the reaction tRNA(Leu) + L-leucine + ATP = L-leucyl-tRNA(Leu) + AMP + diphosphate. The sequence is that of Leucine--tRNA ligase from Serratia proteamaculans (strain 568).